We begin with the raw amino-acid sequence, 237 residues long: NAD-dependent protein deacetylase (237 aa).

The Deacetylase sirtuin-type domain occupies 1–237 (MQDITQAEAI…TIFAELTIKE (237 aa)). Alanine 25, threonine 29, arginine 37, glutamine 100, isoleucine 102, aspartate 103, and histidine 118 together coordinate NAD(+). Positions 102 and 103 each coordinate nicotinamide. The active-site Proton acceptor is histidine 118. Zn(2+) contacts are provided by cysteine 126, cysteine 129, histidine 144, and cysteine 147. 3 residues coordinate NAD(+): threonine 185, serine 186, and asparagine 209.

Belongs to the sirtuin family. Class U subfamily.

Its subcellular location is the cytoplasm. The catalysed reaction is N(6)-acetyl-L-lysyl-[protein] + NAD(+) + H2O = 2''-O-acetyl-ADP-D-ribose + nicotinamide + L-lysyl-[protein]. In terms of biological role, NAD-dependent protein deacetylase which modulates the activities of several enzymes which are inactive in their acetylated form. This is NAD-dependent protein deacetylase from Enterococcus faecalis (strain ATCC 700802 / V583).